A 394-amino-acid polypeptide reads, in one-letter code: Elongation factor Tu 2 (394 aa).

In terms of domain architecture, tr-type G spans 10–204; sequence KPHVNVGTIG…ALDSYIPEPE (195 aa). Positions 19–26 are G1; that stretch reads GHVDHGKT. Residue 19 to 26 participates in GTP binding; sequence GHVDHGKT. Mg(2+) is bound at residue T26. Positions 60-64 are G2; the sequence is GITIN. A G3 region spans residues 81 to 84; the sequence is DCPG. Residues 81–85 and 136–139 contribute to the GTP site; these read DCPGH and NKCD. The G4 stretch occupies residues 136 to 139; it reads NKCD. The segment at 174 to 176 is G5; sequence SAL.

The protein belongs to the TRAFAC class translation factor GTPase superfamily. Classic translation factor GTPase family. EF-Tu/EF-1A subfamily. In terms of assembly, monomer.

The protein localises to the cytoplasm. The enzyme catalyses GTP + H2O = GDP + phosphate + H(+). Functionally, GTP hydrolase that promotes the GTP-dependent binding of aminoacyl-tRNA to the A-site of ribosomes during protein biosynthesis. The chain is Elongation factor Tu 2 from Shewanella oneidensis (strain ATCC 700550 / JCM 31522 / CIP 106686 / LMG 19005 / NCIMB 14063 / MR-1).